Consider the following 607-residue polypeptide: DNA polymerase (607 aa).

The 3'-5' exonuclease domain maps to 1–213; sequence MIELRHEVQG…CSALAPLVPD (213 aa). A polymerase region spans residues 214 to 607; the sequence is VSRPLVPYEH…SWGSLYGADY (394 aa).

This sequence belongs to the DNA polymerase type-A family.

The enzyme catalyses DNA(n) + a 2'-deoxyribonucleoside 5'-triphosphate = DNA(n+1) + diphosphate. Replicates viral genomic DNA. This polymerase possesses two enzymatic activities: DNA synthesis (polymerase) and an exonucleolytic activity that degrades single-stranded DNA in the 3'-5' direction. This Mycobacterium phage D29 (Mycobacteriophage D29) protein is DNA polymerase (44).